A 954-amino-acid chain; its full sequence is Glycine dehydrogenase (decarboxylating) (954 aa).

Lys704 bears the N6-(pyridoxal phosphate)lysine mark.

This sequence belongs to the GcvP family. The glycine cleavage system is composed of four proteins: P, T, L and H. The cofactor is pyridoxal 5'-phosphate.

The catalysed reaction is N(6)-[(R)-lipoyl]-L-lysyl-[glycine-cleavage complex H protein] + glycine + H(+) = N(6)-[(R)-S(8)-aminomethyldihydrolipoyl]-L-lysyl-[glycine-cleavage complex H protein] + CO2. The glycine cleavage system catalyzes the degradation of glycine. The P protein binds the alpha-amino group of glycine through its pyridoxal phosphate cofactor; CO(2) is released and the remaining methylamine moiety is then transferred to the lipoamide cofactor of the H protein. The protein is Glycine dehydrogenase (decarboxylating) of Rhizobium etli (strain ATCC 51251 / DSM 11541 / JCM 21823 / NBRC 15573 / CFN 42).